We begin with the raw amino-acid sequence, 184 residues long: Protein DESIGUAL 3 (184 aa).

The signal sequence occupies residues Met1–Gly24. Basic residues predominate over residues Ala34–His45. Residues Ala34 to Ser53 are disordered. 3 consecutive transmembrane segments (helical) span residues Gly62–Cys82, Ile99–Leu119, and Phe140–Val160. The N-linked (GlcNAc...) asparagine glycan is linked to Asn180.

Belongs to the DESIGUAL family. As to expression, mainly expressed in roots, inflorescences and developing leaves, and, at low levels, in mature leaves.

It localises to the endoplasmic reticulum membrane. In terms of biological role, involved, partially redundantly with VCC/DEAL1 and DEAL2, to ensure bilateral symmetry development and early leaf margin patterning, probably via the regulation of auxin and CUC2 distribution. This is Protein DESIGUAL 3 from Arabidopsis thaliana (Mouse-ear cress).